Here is a 266-residue protein sequence, read N- to C-terminus: Norfluorocurarine synthase 2 (266 aa).

An AB hydrolase-1 domain is found at 11 to 121 (HFVLVHGAGH…IMPDSTHPPI (111 aa)). Active-site residues include S86, D216, and H244.

It belongs to the AB hydrolase superfamily. In terms of assembly, homodimer. In terms of tissue distribution, mainly expressed in roots.

It carries out the reaction 17-dehydropreakuammicine + H2O = norfluorocurarine + methanol + CO2. Its pathway is alkaloid biosynthesis. In terms of biological role, hydrolase involved in the biosynthesis of curare monoterpene indole alkaloids (MIAs), natural products such as strychnine, a neurotoxic compound used as a pesticide to control rodents, and its pharmacologically active derivatives, including brucine, used to regulate blood pressure. Curare alkaloids act as animal glycine receptor antagonists. Catalyzes the conversion of dehydropreakuammicine to norfluorocurarine. In Strychnos nux-vomica (Poison nut), this protein is Norfluorocurarine synthase 2.